A 689-amino-acid chain; its full sequence is Homoaconitase, mitochondrial (689 aa).

The N-terminal 17 residues, 1–17, are a transit peptide targeting the mitochondrion; sequence MVVLRRSFHVYTRLQRG. Cys-336, Cys-403, and Cys-406 together coordinate [4Fe-4S] cluster.

Belongs to the aconitase/IPM isomerase family. [4Fe-4S] cluster is required as a cofactor.

Its subcellular location is the mitochondrion. The enzyme catalyses (2R,3S)-homoisocitrate = cis-homoaconitate + H2O. Its pathway is amino-acid biosynthesis; L-lysine biosynthesis via AAA pathway; L-alpha-aminoadipate from 2-oxoglutarate: step 3/5. Its function is as follows. Catalyzes the reversible hydration of cis-homoaconitate to (2R,3S)-homoisocitrate, a step in the alpha-aminoadipate pathway for lysine biosynthesis. This Candida glabrata (strain ATCC 2001 / BCRC 20586 / JCM 3761 / NBRC 0622 / NRRL Y-65 / CBS 138) (Yeast) protein is Homoaconitase, mitochondrial (LYS4).